The chain runs to 724 residues: Catalase-peroxidase (724 aa).

The interval 1–26 (MDENKTKPTGKCPVMHGGNTSTGSSN) is disordered. Positions 98–225 (WHSAGSYRTT…LAAVQMGLIY (128 aa)) form a cross-link, tryptophyl-tyrosyl-methioninium (Trp-Tyr) (with M-251). Catalysis depends on histidine 99, which acts as the Proton acceptor. Residues 225-251 (YVNPEGVDGKSDPLRTAQDMRVTFSRM) constitute a cross-link (tryptophyl-tyrosyl-methioninium (Tyr-Met) (with W-98)). Residue histidine 266 participates in heme b binding.

Belongs to the peroxidase family. Peroxidase/catalase subfamily. Homodimer or homotetramer. The cofactor is heme b. Formation of the three residue Trp-Tyr-Met cross-link is important for the catalase, but not the peroxidase activity of the enzyme.

The catalysed reaction is H2O2 + AH2 = A + 2 H2O. It catalyses the reaction 2 H2O2 = O2 + 2 H2O. Its function is as follows. Bifunctional enzyme with both catalase and broad-spectrum peroxidase activity. This chain is Catalase-peroxidase, found in Pectobacterium atrosepticum (strain SCRI 1043 / ATCC BAA-672) (Erwinia carotovora subsp. atroseptica).